A 275-amino-acid chain; its full sequence is 3-methyl-2-oxobutanoate hydroxymethyltransferase (275 aa).

Positions 49 and 88 each coordinate Mg(2+). Residues 49–50 (DS), aspartate 88, and lysine 118 contribute to the 3-methyl-2-oxobutanoate site. Glutamate 120 is a binding site for Mg(2+). The active-site Proton acceptor is glutamate 187.

The protein belongs to the PanB family. As to quaternary structure, homodecamer; pentamer of dimers. Mg(2+) is required as a cofactor.

It localises to the cytoplasm. The enzyme catalyses 3-methyl-2-oxobutanoate + (6R)-5,10-methylene-5,6,7,8-tetrahydrofolate + H2O = 2-dehydropantoate + (6S)-5,6,7,8-tetrahydrofolate. Its pathway is cofactor biosynthesis; (R)-pantothenate biosynthesis; (R)-pantoate from 3-methyl-2-oxobutanoate: step 1/2. In terms of biological role, catalyzes the reversible reaction in which hydroxymethyl group from 5,10-methylenetetrahydrofolate is transferred onto alpha-ketoisovalerate to form ketopantoate. This is 3-methyl-2-oxobutanoate hydroxymethyltransferase from Bartonella quintana (strain Toulouse) (Rochalimaea quintana).